A 206-amino-acid polypeptide reads, in one-letter code: dTTP/UTP pyrophosphatase (206 aa).

The Proton acceptor role is filled by aspartate 79.

It belongs to the Maf family. YhdE subfamily. It depends on a divalent metal cation as a cofactor.

Its subcellular location is the cytoplasm. The enzyme catalyses dTTP + H2O = dTMP + diphosphate + H(+). The catalysed reaction is UTP + H2O = UMP + diphosphate + H(+). Its function is as follows. Nucleoside triphosphate pyrophosphatase that hydrolyzes dTTP and UTP. May have a dual role in cell division arrest and in preventing the incorporation of modified nucleotides into cellular nucleic acids. The sequence is that of dTTP/UTP pyrophosphatase from Rhizobium meliloti (strain 1021) (Ensifer meliloti).